We begin with the raw amino-acid sequence, 189 residues long: Probable nicotinate-nucleotide adenylyltransferase (189 aa).

This sequence belongs to the NadD family.

The enzyme catalyses nicotinate beta-D-ribonucleotide + ATP + H(+) = deamido-NAD(+) + diphosphate. It participates in cofactor biosynthesis; NAD(+) biosynthesis; deamido-NAD(+) from nicotinate D-ribonucleotide: step 1/1. Its function is as follows. Catalyzes the reversible adenylation of nicotinate mononucleotide (NaMN) to nicotinic acid adenine dinucleotide (NaAD). The polypeptide is Probable nicotinate-nucleotide adenylyltransferase (Staphylococcus aureus (strain USA300 / TCH1516)).